The primary structure comprises 127 residues: Large ribosomal subunit protein bL12 (127 aa).

It belongs to the bacterial ribosomal protein bL12 family. As to quaternary structure, homodimer. Part of the ribosomal stalk of the 50S ribosomal subunit. Forms a multimeric L10(L12)X complex, where L10 forms an elongated spine to which 2 to 4 L12 dimers bind in a sequential fashion. Binds GTP-bound translation factors.

Functionally, forms part of the ribosomal stalk which helps the ribosome interact with GTP-bound translation factors. Is thus essential for accurate translation. This Phytoplasma mali (strain AT) protein is Large ribosomal subunit protein bL12.